Reading from the N-terminus, the 446-residue chain is Immunoglobulin heavy constant gamma 3 (446 aa).

The interval 1–98 is CH1; that stretch reads ASTKGPSVFP…PSNTKVDKRV (98 aa). The Extracellular segment spans residues 1–397; that stretch reads ASTKGPSVFP…DGELDGLWTT (397 aa). In terms of domain architecture, Ig-like 1 spans 6–99; it reads PSVFPLAPCS…SNTKVDKRVE (94 aa). Cys-27 and Cys-83 are oxidised to a cystine. The interval 99–160 is hinge; sequence ELKTPLGDTT…DTPPPCPRCP (62 aa). 3 repeats span residues 116 to 130, 131 to 145, and 146 to 160; these read EPKS…PRCP. 3 O-linked (GalNAc...) threonine glycosylation sites follow: Thr-122, Thr-137, and Thr-152. A CH2 region spans residues 161-270; that stretch reads APELLGGPSV…PIEKTISKTK (110 aa). Ig-like domains follow at residues 168 to 267 and 276 to 372; these read PSVF…KTIS and PQVY…KSLS. Cystine bridges form between Cys-191–Cys-251 and Cys-297–Cys-355. 2 N-linked (GlcNAc...) asparagine glycosylation sites follow: Asn-227 and Asn-322. Residues 271–376 form a CH3 region; sequence GQPREPQVYT…TQKSLSLSPE (106 aa). The chain crosses the membrane as a helical span at residues 398–418; sequence ITIFITLFLLSVCYSATVTFF. Topologically, residues 419–446 are cytoplasmic; it reads KVKWIFSSVVDLKQTIIPDYRNMIGQGA.

As to quaternary structure, immunoglobulins are composed of two identical heavy chains and two identical light chains; disulfide-linked. In terms of processing, N-linked glycans at Asn-322 are noncore fucosylated and the vast majority are diantennary species with a bisecting GlcNAc. Among them the most dominant glycans are HexNAc5Hex4, HexNAc5Hex5, and HexNAc5Hex5Sia1. Post-translationally, N-linked glycans at Asn-227 are diantennary core fucosylated structures without bisecting GlcNAc (HexNAc4Hex4Fuc1, HexNAc4Hex5Fuc1, and HexNAc4Hex5Fuc1Sia1). Glycosylation on Asn-227 is required for interaction with Fc receptors and ability to activate the complement pathway. (Microbial infection) Deglycosylation on Asn-227 by S.pyogenes EndoS or Endos2 endoglucosidases prevents interaction between immunoglobulin-gamma (IgG) and Fc receptors, impairing ability to activate the complement pathway. In terms of processing, O-linked glycans are non-, mono- and disialylated core 1-type O-glycans.

It is found in the secreted. The protein resides in the cell membrane. In terms of biological role, constant region of immunoglobulin heavy chains. Immunoglobulins, also known as antibodies, are membrane-bound or secreted glycoproteins produced by B lymphocytes. In the recognition phase of humoral immunity, the membrane-bound immunoglobulins serve as receptors which, upon binding of a specific antigen, trigger the clonal expansion and differentiation of B lymphocytes into immunoglobulins-secreting plasma cells. Secreted immunoglobulins mediate the effector phase of humoral immunity, which results in the elimination of bound antigens. The antigen binding site is formed by the variable domain of one heavy chain, together with that of its associated light chain. Thus, each immunoglobulin has two antigen binding sites with remarkable affinity for a particular antigen. The variable domains are assembled by a process called V-(D)-J rearrangement and can then be subjected to somatic hypermutations which, after exposure to antigen and selection, allow affinity maturation for a particular antigen. This Homo sapiens (Human) protein is Immunoglobulin heavy constant gamma 3.